We begin with the raw amino-acid sequence, 446 residues long: Histidine--tRNA ligase (446 aa).

Residues 403–422 (TASVKPLRGTGDDGEKSVQQ) form a disordered region.

The protein belongs to the class-II aminoacyl-tRNA synthetase family. As to quaternary structure, homodimer.

It is found in the cytoplasm. It catalyses the reaction tRNA(His) + L-histidine + ATP = L-histidyl-tRNA(His) + AMP + diphosphate + H(+). This chain is Histidine--tRNA ligase, found in Burkholderia thailandensis (strain ATCC 700388 / DSM 13276 / CCUG 48851 / CIP 106301 / E264).